A 945-amino-acid chain; its full sequence is Sensor kinase CckA (945 aa).

2 consecutive transmembrane segments (helical) span residues 111–131 (ALRL…YFLF) and 139–159 (FALV…FGAA). PAS domains are found at residues 171 to 212 (HQDL…TDAD), 313 to 341 (LDHA…EWLG), and 432 to 505 (AEVR…FAGQ). The Histidine kinase domain maps to 574-797 (GIAHDFNNVL…TFKIFLPRLI (224 aa)). A Phosphohistidine; by autocatalysis modification is found at histidine 577. Residues 825–941 (TVLLVEDEDA…QLATTVKEML (117 aa)) enclose the Response regulatory domain. A 4-aspartylphosphate modification is found at aspartate 876.

It localises to the cell inner membrane. The enzyme catalyses ATP + protein L-histidine = ADP + protein N-phospho-L-histidine.. In terms of biological role, component of a regulatory phosphorelay system that controls B.abortus cell growth, division, and intracellular survival inside mammalian host cells. This signaling pathway is composed of CckA, ChpT, CtrA and CpdR. CckA autophosphorylates in the presence of ATP on a conserved His residue and transfers a phosphoryl group to a conserved Asp residue on its C-terminal receiver domain. CckA-P transfers phosphoryl groups to the ChpT phosphotransferase. The chain is Sensor kinase CckA from Brucella abortus (strain 2308).